A 231-amino-acid polypeptide reads, in one-letter code: GFP-like fluorescent chromoprotein FP506 (231 aa).

Positions 66–68 (NYG) form a cross-link, 5-imidazolinone (Asn-Gly). Tyr67 is subject to 2,3-didehydrotyrosine.

This sequence belongs to the GFP family. In terms of processing, contains a chromophore consisting of modified amino acid residues. The chromophore is formed by autocatalytic backbone condensation between Xaa-N and Gly-(N+2), and oxidation of Tyr-(N+1) to didehydrotyrosine. Maturation of the chromophore requires nothing other than molecular oxygen. The precise stereochemistry of the tyrosine has not been determined. In terms of tissue distribution, tentacle and oral disk.

In terms of biological role, pigment protein that is yellow-green in color. This is GFP-like fluorescent chromoprotein FP506 from Zoanthus sp. (Green polyp).